Here is a 433-residue protein sequence, read N- to C-terminus: Serine hydroxymethyltransferase (433 aa).

Residues L132 and G136–L138 each bind (6S)-5,6,7,8-tetrahydrofolate. At K241 the chain carries N6-(pyridoxal phosphate)lysine.

Belongs to the SHMT family. As to quaternary structure, homodimer. Pyridoxal 5'-phosphate serves as cofactor.

It is found in the cytoplasm. The enzyme catalyses (6R)-5,10-methylene-5,6,7,8-tetrahydrofolate + glycine + H2O = (6S)-5,6,7,8-tetrahydrofolate + L-serine. The protein operates within one-carbon metabolism; tetrahydrofolate interconversion. Its pathway is amino-acid biosynthesis; glycine biosynthesis; glycine from L-serine: step 1/1. Functionally, catalyzes the reversible interconversion of serine and glycine with tetrahydrofolate (THF) serving as the one-carbon carrier. This reaction serves as the major source of one-carbon groups required for the biosynthesis of purines, thymidylate, methionine, and other important biomolecules. Also exhibits THF-independent aldolase activity toward beta-hydroxyamino acids, producing glycine and aldehydes, via a retro-aldol mechanism. The sequence is that of Serine hydroxymethyltransferase from Nitrobacter winogradskyi (strain ATCC 25391 / DSM 10237 / CIP 104748 / NCIMB 11846 / Nb-255).